The following is a 139-amino-acid chain: MANSSSGMAVDDECKLKFMELKAKRNFRFIVFKIEEKVQQVTVERLGQPNESYDDFTECLPPNECRYAVFDFDFVTDENCQKSKIFFISWSPDTSRVRSKMLYASTKDRFKRELDGIQVELQATDPSEMSMDIIKARAF.

The 135-residue stretch at 5 to 139 (SSGMAVDDEC…SMDIIKARAF (135 aa)) folds into the ADF-H domain.

Belongs to the actin-binding proteins ADF family. In terms of tissue distribution, preferentially in mature anther.

Functionally, actin-depolymerizing protein. Severs actin filaments (F-actin) and binds to actin monomers. The chain is Actin-depolymerizing factor from Lilium longiflorum (Trumpet lily).